Consider the following 199-residue polypeptide: NAD(P)H dehydrogenase (quinone) (199 aa).

In terms of domain architecture, Flavodoxin-like spans 4 to 190 (VLVLYYSAYG…EAAKYQGAHV (187 aa)). FMN is bound by residues 10–15 (SAYGHI) and 78–80 (TRF). Y12 is an NAD(+) binding site. W98 contributes to the substrate binding site. Residues 113 to 119 (SSATQHG) and H134 each bind FMN.

It belongs to the WrbA family. It depends on FMN as a cofactor.

It catalyses the reaction a quinone + NADH + H(+) = a quinol + NAD(+). The catalysed reaction is a quinone + NADPH + H(+) = a quinol + NADP(+). The chain is NAD(P)H dehydrogenase (quinone) from Rhizobium rhizogenes (strain K84 / ATCC BAA-868) (Agrobacterium radiobacter).